A 243-amino-acid chain; its full sequence is 7-carboxy-7-deazaguanine synthase (243 aa).

Residues 9–11 (IMG) and Arg24 contribute to the substrate site. Residues 15–243 (YIGRRFIFVR…IQMHKYLGML (229 aa)) form the Radical SAM core domain. Residues Cys28, Cys32, and Cys35 each coordinate [4Fe-4S] cluster. Residue Thr84 participates in substrate binding. Gly86 lines the S-adenosyl-L-methionine pocket.

Belongs to the radical SAM superfamily. 7-carboxy-7-deazaguanine synthase family. As to quaternary structure, homodimer. It depends on [4Fe-4S] cluster as a cofactor. S-adenosyl-L-methionine is required as a cofactor. Mg(2+) serves as cofactor.

The enzyme catalyses 6-carboxy-5,6,7,8-tetrahydropterin + H(+) = 7-carboxy-7-deazaguanine + NH4(+). It functions in the pathway purine metabolism; 7-cyano-7-deazaguanine biosynthesis. Catalyzes the complex heterocyclic radical-mediated conversion of 6-carboxy-5,6,7,8-tetrahydropterin (CPH4) to 7-carboxy-7-deazaguanine (CDG), a step common to the biosynthetic pathways of all 7-deazapurine-containing compounds. This is 7-carboxy-7-deazaguanine synthase from Methanocaldococcus jannaschii (strain ATCC 43067 / DSM 2661 / JAL-1 / JCM 10045 / NBRC 100440) (Methanococcus jannaschii).